The following is a 268-amino-acid chain: Tryptophan synthase alpha chain (268 aa).

Active-site proton acceptor residues include E49 and D60.

It belongs to the TrpA family. In terms of assembly, tetramer of two alpha and two beta chains.

It catalyses the reaction (1S,2R)-1-C-(indol-3-yl)glycerol 3-phosphate + L-serine = D-glyceraldehyde 3-phosphate + L-tryptophan + H2O. Its pathway is amino-acid biosynthesis; L-tryptophan biosynthesis; L-tryptophan from chorismate: step 5/5. The alpha subunit is responsible for the aldol cleavage of indoleglycerol phosphate to indole and glyceraldehyde 3-phosphate. The chain is Tryptophan synthase alpha chain from Photorhabdus laumondii subsp. laumondii (strain DSM 15139 / CIP 105565 / TT01) (Photorhabdus luminescens subsp. laumondii).